The sequence spans 364 residues: GDP-fucose transporter 1 (364 aa).

The next 8 membrane-spanning stretches (helical) occupy residues 34–56 (FLLR…ISMV), 76–98 (VTFY…AACC), 111–130 (LRVA…MITF), 140–162 (VAFY…YLLL), 167–185 (SFYA…WLGV), 195–214 (SWLG…LNAI), 227–249 (IWRL…LLLL), and 264–286 (AHFW…VTGL).

This sequence belongs to the TPT transporter family. SLC35C subfamily.

Its subcellular location is the golgi apparatus membrane. The enzyme catalyses GMP(out) + GDP-beta-L-fucose(in) = GMP(in) + GDP-beta-L-fucose(out). Antiporter specific for GDP-l-fucose and depending on the concomitant reverse transport of GMP. Involved in GDP-fucose import from the cytoplasm into the Golgi lumen. This is GDP-fucose transporter 1 from Homo sapiens (Human).